A 331-amino-acid polypeptide reads, in one-letter code: Fructose-1,6-bisphosphatase class 1 (331 aa).

Residues glutamate 80, aspartate 98, leucine 100, and aspartate 101 each contribute to the Mg(2+) site. Residues 101–104 (DGSS) and asparagine 189 contribute to the substrate site. Glutamate 261 serves as a coordination point for Mg(2+).

Belongs to the FBPase class 1 family. In terms of assembly, homotetramer. Mg(2+) serves as cofactor.

Its subcellular location is the cytoplasm. It catalyses the reaction beta-D-fructose 1,6-bisphosphate + H2O = beta-D-fructose 6-phosphate + phosphate. It participates in carbohydrate biosynthesis; gluconeogenesis. The protein is Fructose-1,6-bisphosphatase class 1 of Rhodobacter capsulatus (strain ATCC BAA-309 / NBRC 16581 / SB1003).